We begin with the raw amino-acid sequence, 268 residues long: Imidazole glycerol phosphate synthase subunit HisF (268 aa).

Active-site residues include aspartate 12 and aspartate 131.

It belongs to the HisA/HisF family. Heterodimer of HisH and HisF.

It localises to the cytoplasm. The catalysed reaction is 5-[(5-phospho-1-deoxy-D-ribulos-1-ylimino)methylamino]-1-(5-phospho-beta-D-ribosyl)imidazole-4-carboxamide + L-glutamine = D-erythro-1-(imidazol-4-yl)glycerol 3-phosphate + 5-amino-1-(5-phospho-beta-D-ribosyl)imidazole-4-carboxamide + L-glutamate + H(+). The protein operates within amino-acid biosynthesis; L-histidine biosynthesis; L-histidine from 5-phospho-alpha-D-ribose 1-diphosphate: step 5/9. Functionally, IGPS catalyzes the conversion of PRFAR and glutamine to IGP, AICAR and glutamate. The HisF subunit catalyzes the cyclization activity that produces IGP and AICAR from PRFAR using the ammonia provided by the HisH subunit. This Methanosphaerula palustris (strain ATCC BAA-1556 / DSM 19958 / E1-9c) protein is Imidazole glycerol phosphate synthase subunit HisF.